Reading from the N-terminus, the 458-residue chain is MQLFKERRVLTVSALTALVRGLLEENFEQVWVEGEISNLACPQSGHCYFTLKDAGAQIRCVMFRGAFRSLKFTPRDGMRILTRGRLTLFEPRGEYQLVADYLEPQGIGGLQMAFIQLKEKLAKEGLFSELHKIEIPKLPRRIGIVTSPTGAAIRDILTVLNRRFTNVELLISPVRVQGEGAAREIADAIDDLNRVGNIDVMIVGRGGGSLEDLWAFNEEVVARAIHRSKVPVISAVGHEIDFTIADFVADLRAATPSAAAELVVASKKELTAEVEALSHRLHVSQQRRLERSRALVTALSRAITDPSRVLGHLAQRVDSLDARLVREAGLILDDASERIVTLTARLSRQTPALTLKRWEERLATLSLRLDHAMTRRLACAAESVGLATGTLNAVSPLATLSRGYSITRKLPARSVVTSSRQLAPGDRVEVSFAAGSALCTVEQASRESDSLTAPPRSV.

Belongs to the XseA family. Heterooligomer composed of large and small subunits.

It localises to the cytoplasm. It catalyses the reaction Exonucleolytic cleavage in either 5'- to 3'- or 3'- to 5'-direction to yield nucleoside 5'-phosphates.. Its function is as follows. Bidirectionally degrades single-stranded DNA into large acid-insoluble oligonucleotides, which are then degraded further into small acid-soluble oligonucleotides. The chain is Exodeoxyribonuclease 7 large subunit from Geobacter sp. (strain M21).